We begin with the raw amino-acid sequence, 143 residues long: Large ribosomal subunit protein uL13 (143 aa).

Belongs to the universal ribosomal protein uL13 family. Part of the 50S ribosomal subunit.

Functionally, this protein is one of the early assembly proteins of the 50S ribosomal subunit, although it is not seen to bind rRNA by itself. It is important during the early stages of 50S assembly. The sequence is that of Large ribosomal subunit protein uL13 from Alkaliphilus oremlandii (strain OhILAs) (Clostridium oremlandii (strain OhILAs)).